Consider the following 362-residue polypeptide: Probable endopolygalacturonase II (362 aa).

Positions 1 to 20 (MHSFASLLAYGLAAGATLAS) are cleaved as a signal peptide. A propeptide spanning residues 21–27 (ASPIEAR) is cleaved from the precursor. An intrachain disulfide couples Cys30 to Cys45. The PbH1 1 repeat unit spans residues 156-186 (SDDITLTDITINNADGDSLGGHNTDAFDVGN). The active-site Proton donor is the Asp201. Cys203 and Cys219 are disulfide-bonded. PbH1 repeat units follow at residues 209–229 (GENIWFTGGTCIGGHGLSIGS), 238–259 (VKNVTIEHSTVSNSENAVRIKT), 267–289 (VSEITYSNIVMSGISDYGVVIQQ), and 301–322 (TNGVTITDVKLESVTGTVDSKA). Residue His223 is part of the active site. A glycan (N-linked (GlcNAc...) asparagine) is linked at Asn240. 2 cysteine pairs are disulfide-bonded: Cys329–Cys334 and Cys353–Cys362.

It belongs to the glycosyl hydrolase 28 family.

Its subcellular location is the secreted. It carries out the reaction (1,4-alpha-D-galacturonosyl)n+m + H2O = (1,4-alpha-D-galacturonosyl)n + (1,4-alpha-D-galacturonosyl)m.. Functionally, involved in maceration and soft-rotting of plant tissue. Hydrolyzes the 1,4-alpha glycosidic bonds of de-esterified pectate in the smooth region of the plant cell wall. This chain is Probable endopolygalacturonase II (pgaII), found in Aspergillus kawachii (strain NBRC 4308) (White koji mold).